The primary structure comprises 332 residues: Ornithine carbamoyltransferase, catabolic (332 aa).

Carbamoyl phosphate-binding positions include 60-63 (STRT), Gln-87, Arg-111, and 138-141 (HPTQ). L-ornithine-binding positions include Asn-170, Asp-230, and 234–235 (SM). Carbamoyl phosphate contacts are provided by residues 271 to 272 (CL) and Arg-316.

Belongs to the aspartate/ornithine carbamoyltransferase superfamily. OTCase family.

The protein localises to the cytoplasm. It catalyses the reaction carbamoyl phosphate + L-ornithine = L-citrulline + phosphate + H(+). The protein operates within amino-acid degradation; L-arginine degradation via ADI pathway; carbamoyl phosphate from L-arginine: step 2/2. Reversibly catalyzes the transfer of the carbamoyl group from carbamoyl phosphate (CP) to the N(epsilon) atom of ornithine (ORN) to produce L-citrulline. This is Ornithine carbamoyltransferase, catabolic (arcB) from Bacillus cereus (strain ATCC 14579 / DSM 31 / CCUG 7414 / JCM 2152 / NBRC 15305 / NCIMB 9373 / NCTC 2599 / NRRL B-3711).